A 213-amino-acid chain; its full sequence is 3-isopropylmalate dehydratase small subunit (213 aa).

Belongs to the LeuD family. LeuD type 1 subfamily. As to quaternary structure, heterodimer of LeuC and LeuD.

The enzyme catalyses (2R,3S)-3-isopropylmalate = (2S)-2-isopropylmalate. It functions in the pathway amino-acid biosynthesis; L-leucine biosynthesis; L-leucine from 3-methyl-2-oxobutanoate: step 2/4. Catalyzes the isomerization between 2-isopropylmalate and 3-isopropylmalate, via the formation of 2-isopropylmaleate. This Pseudomonas savastanoi pv. phaseolicola (strain 1448A / Race 6) (Pseudomonas syringae pv. phaseolicola (strain 1448A / Race 6)) protein is 3-isopropylmalate dehydratase small subunit.